A 256-amino-acid polypeptide reads, in one-letter code: Deoxyribose-phosphate aldolase (256 aa).

The Proton donor/acceptor role is filled by aspartate 102. Lysine 165 serves as the catalytic Schiff-base intermediate with acetaldehyde. Lysine 197 functions as the Proton donor/acceptor in the catalytic mechanism.

This sequence belongs to the DeoC/FbaB aldolase family. DeoC type 2 subfamily.

The protein localises to the cytoplasm. The enzyme catalyses 2-deoxy-D-ribose 5-phosphate = D-glyceraldehyde 3-phosphate + acetaldehyde. Its pathway is carbohydrate degradation; 2-deoxy-D-ribose 1-phosphate degradation; D-glyceraldehyde 3-phosphate and acetaldehyde from 2-deoxy-alpha-D-ribose 1-phosphate: step 2/2. Functionally, catalyzes a reversible aldol reaction between acetaldehyde and D-glyceraldehyde 3-phosphate to generate 2-deoxy-D-ribose 5-phosphate. This is Deoxyribose-phosphate aldolase from Shewanella oneidensis (strain ATCC 700550 / JCM 31522 / CIP 106686 / LMG 19005 / NCIMB 14063 / MR-1).